The primary structure comprises 437 residues: Immunoglobulin superfamily member 11 (437 aa).

An N-terminal signal peptide occupies residues 1–22; the sequence is MTCRGSPLAPLLLFSLHGVAAS. The Ig-like V-type domain occupies 23–136; the sequence is LEVSESPGSV…DRGGRNIGVT (114 aa). Topologically, residues 23–241 are extracellular; it reads LEVSESPGSV…VISPQPRSIG (219 aa). 2 cysteine pairs are disulfide-bonded: Cys-44/Cys-120 and Cys-165/Cys-215. An N-linked (GlcNAc...) asparagine glycan is attached at Asn-102. One can recognise an Ig-like C2-type domain in the interval 144–234; the sequence is PSAPHCQIQG…TCLLDLQVIS (91 aa). The helical transmembrane segment at 242–262 threads the bilayer; it reads LIAGAIGTGAVIIIFCIALIL. At 263 to 437 the chain is on the cytoplasmic side; sequence GAFFYWRSKN…PAQSRAGSLV (175 aa). Omega-N-methylarginine is present on Arg-379. The interval 382-405 is disordered; the sequence is SLPAVSRSNGSVSRKARPPPVPSL.

N-glycosylated.

It localises to the cell membrane. Its function is as follows. Functions as a cell adhesion molecule through homophilic interaction. Stimulates cell growth. The chain is Immunoglobulin superfamily member 11 (IGSF11) from Bos taurus (Bovine).